The chain runs to 371 residues: tRNA-specific 2-thiouridylase MnmA (371 aa).

Residues 13–20 and Met39 each bind ATP; that span reads GMSGGVDS. The interval 99–101 is interaction with target base in tRNA; sequence NPD. Cys104 acts as the Nucleophile in catalysis. Cys104 and Cys200 are disulfide-bonded. Gly128 is a binding site for ATP. Residues 150–152 form an interaction with tRNA region; that stretch reads KDQ. Cys200 (cysteine persulfide intermediate) is an active-site residue. Positions 308–309 are interaction with tRNA; sequence RY.

It belongs to the MnmA/TRMU family.

The protein resides in the cytoplasm. The catalysed reaction is S-sulfanyl-L-cysteinyl-[protein] + uridine(34) in tRNA + AH2 + ATP = 2-thiouridine(34) in tRNA + L-cysteinyl-[protein] + A + AMP + diphosphate + H(+). Catalyzes the 2-thiolation of uridine at the wobble position (U34) of tRNA, leading to the formation of s(2)U34. The sequence is that of tRNA-specific 2-thiouridylase MnmA from Bacillus anthracis.